A 161-amino-acid chain; its full sequence is Nucleotide-binding protein SAR11_0692 (161 aa).

It belongs to the YajQ family.

In terms of biological role, nucleotide-binding protein. This is Nucleotide-binding protein SAR11_0692 from Pelagibacter ubique (strain HTCC1062).